A 311-amino-acid polypeptide reads, in one-letter code: Giardin subunit alpha-8 (311 aa).

4 Annexin repeats span residues 5-73 (RKAY…IRCW), 75-146 (NRHE…DRWM), 154-223 (NNVK…AAHY), and 227-295 (EPSK…SLWR).

This sequence belongs to the annexin family. Giardin subunit alpha subfamily.

It is found in the cytoplasm. The protein resides in the cytoskeleton. Giardins are involved in parasite attachment to the intestinal mucosa and in the cytoskeletal disassembly and reassembly that marks the transition from infectious trophozoite to transmissible cyst. They may interact with other cytoskeletal proteins such as microtubules in the microribbons or crossbridges, to maintain the integrity of the ventral disk. This chain is Giardin subunit alpha-8, found in Giardia intestinalis (Giardia lamblia).